Here is a 369-residue protein sequence, read N- to C-terminus: Chaperone protein DnaJ (369 aa).

The 67-residue stretch at 7-73 (DYYEILGVPR…QKRAMYDRFG (67 aa)) folds into the J domain. The CR-type zinc-finger motif lies at 143 to 225 (GAEIPVEYER…CGGSGRVLRK (83 aa)). Positions 156, 159, 173, 176, 199, 202, 213, and 216 each coordinate Zn(2+). CXXCXGXG motif repeat units follow at residues 156–163 (CPRCGGTG), 173–180 (CPSCGGTG), 199–206 (CERCGGTG), and 213–220 (CHECGGSG).

It belongs to the DnaJ family. In terms of assembly, homodimer. Zn(2+) serves as cofactor.

The protein localises to the cytoplasm. In terms of biological role, participates actively in the response to hyperosmotic and heat shock by preventing the aggregation of stress-denatured proteins and by disaggregating proteins, also in an autonomous, DnaK-independent fashion. Unfolded proteins bind initially to DnaJ; upon interaction with the DnaJ-bound protein, DnaK hydrolyzes its bound ATP, resulting in the formation of a stable complex. GrpE releases ADP from DnaK; ATP binding to DnaK triggers the release of the substrate protein, thus completing the reaction cycle. Several rounds of ATP-dependent interactions between DnaJ, DnaK and GrpE are required for fully efficient folding. Also involved, together with DnaK and GrpE, in the DNA replication of plasmids through activation of initiation proteins. The chain is Chaperone protein DnaJ from Thermotoga maritima (strain ATCC 43589 / DSM 3109 / JCM 10099 / NBRC 100826 / MSB8).